Consider the following 118-residue polypeptide: DNA-binding protein SSO0352 (118 aa).

The protein belongs to the PDCD5 family.

This chain is DNA-binding protein SSO0352, found in Saccharolobus solfataricus (strain ATCC 35092 / DSM 1617 / JCM 11322 / P2) (Sulfolobus solfataricus).